We begin with the raw amino-acid sequence, 373 residues long: DNA replication and repair protein RecF (373 aa).

30–37 serves as a coordination point for ATP; sequence GPNGQGKT.

This sequence belongs to the RecF family.

Its subcellular location is the cytoplasm. Its function is as follows. The RecF protein is involved in DNA metabolism; it is required for DNA replication and normal SOS inducibility. RecF binds preferentially to single-stranded, linear DNA. It also seems to bind ATP. This chain is DNA replication and repair protein RecF, found in Streptomyces avermitilis (strain ATCC 31267 / DSM 46492 / JCM 5070 / NBRC 14893 / NCIMB 12804 / NRRL 8165 / MA-4680).